Here is a 407-residue protein sequence, read N- to C-terminus: MRSWSAPKVPRLPGVGAPLRLFDTAAGEVGPTQPGPTARLYVCGITPYDATHLGHANTYLAFDLVNRLWRDAGHEVHFTQNATDVDDPLLERAEQTGQDWRELAEREIELFRTDMEALRILPPREYVGVTEVIDQVAELIELLRDKGATYDLDGDLYFDVAAAPKFGAVSGYSEERMLDLFGQRGGDPDRAGKKHPLDWLLWRAERPGEPSWPSPFGQGRPGWHIECTAIALANLGSGFDVAGGGSDLIFPHHECGAHEGHVACGEWPFAKAYVHAGMVALDGEKMSKSKGNLVFVSRLRKEADPMAIRLALLAHHYRSDWEWTADQLASAEVRLARWRSAVGLPAGPEAETVLAELRARMTDDLDAPGALAVVDAWADRALAGGGTDPGAPALVRDIVDALLGVEL.

Cys43 is a binding site for Zn(2+). L-cysteinyl-5'-AMP-binding positions include 43–46 (CGIT), Thr58, and 81–83 (NAT). The 'HIGH' region signature appears at 45–55 (ITPYDATHLGH). A 'ERGGDP' region motif is present at residues 183 to 188 (QRGGDP). Residue Trp223 coordinates L-cysteinyl-5'-AMP. Cys227 serves as a coordination point for Zn(2+). Residue 245–247 (GSD) coordinates L-cysteinyl-5'-AMP. His252 provides a ligand contact to Zn(2+). An L-cysteinyl-5'-AMP-binding site is contributed by Val279. The short motif at 285–289 (KMSKS) is the 'KMSKS' region element.

It belongs to the class-I aminoacyl-tRNA synthetase family. MshC subfamily. Monomer. The cofactor is Zn(2+).

The catalysed reaction is 1D-myo-inositol 2-amino-2-deoxy-alpha-D-glucopyranoside + L-cysteine + ATP = 1D-myo-inositol 2-(L-cysteinylamino)-2-deoxy-alpha-D-glucopyranoside + AMP + diphosphate + H(+). In terms of biological role, catalyzes the ATP-dependent condensation of GlcN-Ins and L-cysteine to form L-Cys-GlcN-Ins. The polypeptide is L-cysteine:1D-myo-inositol 2-amino-2-deoxy-alpha-D-glucopyranoside ligase (Streptosporangium roseum (strain ATCC 12428 / DSM 43021 / JCM 3005 / KCTC 9067 / NCIMB 10171 / NRRL 2505 / NI 9100)).